Here is a 259-residue protein sequence, read N- to C-terminus: MSKREDGRLDHELRPVIITRGFTENPAGSVLIEFGHTKVLCTASVTEGVPRWRKATGLGWLTAEYAMLPSATHSRSDRESVRGRLSGRTQEISRLIGRSLRACIDLAALGENTIAIDCDVLQADGGTRTAAITGAYVALADAVTYLSAAGKLSDPRPLSCAIAAVSVGVVDGRIRVDLPYEEDSRAEVDMNVVATDTGTLVEIQGTGEGATFARSTLDKLLDMALGACDTLFAAQRDALALPYPGVLPQGPPPPKAFGT.

Phosphate contacts are provided by residues Arg88 and 126 to 128 (GTR).

The protein belongs to the RNase PH family. Homohexameric ring arranged as a trimer of dimers.

The catalysed reaction is tRNA(n+1) + phosphate = tRNA(n) + a ribonucleoside 5'-diphosphate. Its function is as follows. Phosphorolytic 3'-5' exoribonuclease that plays an important role in tRNA 3'-end maturation. Removes nucleotide residues following the 3'-CCA terminus of tRNAs; can also add nucleotides to the ends of RNA molecules by using nucleoside diphosphates as substrates, but this may not be physiologically important. Probably plays a role in initiation of 16S rRNA degradation (leading to ribosome degradation) during starvation. In Mycobacterium bovis (strain BCG / Pasteur 1173P2), this protein is Ribonuclease PH.